A 1513-amino-acid chain; its full sequence is DNA-directed RNA polymerase subunit beta'' (1513 aa).

Zn(2+)-binding residues include Cys-220, Cys-296, Cys-303, and Cys-306. Positions 644–769 (RTREKDSENE…EYGNPEEDSV (126 aa)) are disordered. The span at 659 to 679 (NEYRTREEECKTLEDEYRTRE) shows a compositional bias: basic and acidic residues. Positions 680 to 707 (EEYETLEDEYGIPENEYETLEDEYGILE) are enriched in acidic residues. The span at 726–737 (NKYRPREDKYGT) shows a compositional bias: basic and acidic residues. A compositionally biased stretch (acidic residues) spans 738-767 (LEEDSEDEHGTLEEDSEEDSEDEYGNPEED).

This sequence belongs to the RNA polymerase beta' chain family. RpoC2 subfamily. As to quaternary structure, in plastids the minimal PEP RNA polymerase catalytic core is composed of four subunits: alpha, beta, beta', and beta''. When a (nuclear-encoded) sigma factor is associated with the core the holoenzyme is formed, which can initiate transcription. Zn(2+) is required as a cofactor.

It localises to the plastid. The protein localises to the chloroplast. It carries out the reaction RNA(n) + a ribonucleoside 5'-triphosphate = RNA(n+1) + diphosphate. DNA-dependent RNA polymerase catalyzes the transcription of DNA into RNA using the four ribonucleoside triphosphates as substrates. The sequence is that of DNA-directed RNA polymerase subunit beta'' from Oryza nivara (Indian wild rice).